The chain runs to 313 residues: Porphobilinogen deaminase (313 aa).

Cys-241 bears the S-(dipyrrolylmethanemethyl)cysteine mark.

Belongs to the HMBS family. Monomer. The cofactor is dipyrromethane.

The enzyme catalyses 4 porphobilinogen + H2O = hydroxymethylbilane + 4 NH4(+). Its pathway is porphyrin-containing compound metabolism; protoporphyrin-IX biosynthesis; coproporphyrinogen-III from 5-aminolevulinate: step 2/4. It functions in the pathway porphyrin-containing compound metabolism; chlorophyll biosynthesis. Functionally, tetrapolymerization of the monopyrrole PBG into the hydroxymethylbilane pre-uroporphyrinogen in several discrete steps. The polypeptide is Porphobilinogen deaminase (Chlorobium luteolum (strain DSM 273 / BCRC 81028 / 2530) (Pelodictyon luteolum)).